Reading from the N-terminus, the 347-residue chain is NADH-ubiquinone oxidoreductase chain 2 (347 aa).

11 helical membrane passes run 3–23 (PPIL…VLTS), 25–45 (HWLL…PILM), 60–80 (FLTQ…NLMF), 96–116 (GLVT…FWVP), 122–142 (ISLS…LSIL), 153–173 (LLIT…LNQT), 178–198 (ILAY…TYNP), 200–220 (LMIL…MLFM), 237–257 (LPLM…LPPL), 274–294 (DMII…YFYM), and 323–343 (IILL…TPMM).

It belongs to the complex I subunit 2 family. Core subunit of respiratory chain NADH dehydrogenase (Complex I) which is composed of 45 different subunits. Interacts with TMEM242.

The protein resides in the mitochondrion inner membrane. The enzyme catalyses a ubiquinone + NADH + 5 H(+)(in) = a ubiquinol + NAD(+) + 4 H(+)(out). Core subunit of the mitochondrial membrane respiratory chain NADH dehydrogenase (Complex I) which catalyzes electron transfer from NADH through the respiratory chain, using ubiquinone as an electron acceptor. Essential for the catalytic activity and assembly of complex I. This chain is NADH-ubiquinone oxidoreductase chain 2, found in Halichoerus grypus (Gray seal).